A 352-amino-acid chain; its full sequence is Photosystem II D2 protein (352 aa).

The chain crosses the membrane as a helical span at residues 40–60 (CAFMALGGWLTGTTFVTSWYT). His117 provides a ligand contact to chlorophyll a. Residues 124-140 (GFMLRQFEIARLVGIRP) form a helical membrane-spanning segment. The pheophytin a site is built by Gln129 and Asn142. A helical transmembrane segment spans residues 152-165 (VFVSVFLMYPLGQS). His197 contributes to the chlorophyll a binding site. Residues 207-227 (GALLCAIHGATVENTLFEDSD) traverse the membrane as a helical segment. Residues His214 and Phe261 each coordinate a plastoquinone. His214 contributes to the Fe cation binding site. Residue His268 coordinates Fe cation. Residues 278–294 (GLWMSSVGIVGLALNLR) traverse the membrane as a helical segment.

This sequence belongs to the reaction center PufL/M/PsbA/D family. As to quaternary structure, PSII is composed of 1 copy each of membrane proteins PsbA, PsbB, PsbC, PsbD, PsbE, PsbF, PsbH, PsbI, PsbJ, PsbK, PsbL, PsbM, PsbT, PsbX, PsbY, PsbZ, Psb30/Ycf12, peripheral proteins PsbO, CyanoQ (PsbQ), PsbU, PsbV and a large number of cofactors. It forms dimeric complexes. The D1/D2 heterodimer binds P680, chlorophylls that are the primary electron donor of PSII, and subsequent electron acceptors. It shares a non-heme iron and each subunit binds pheophytin, quinone, additional chlorophylls, carotenoids and lipids. There is also a Cl(-1) ion associated with D1 and D2, which is required for oxygen evolution. The PSII complex binds additional chlorophylls, carotenoids and specific lipids. is required as a cofactor.

It localises to the cellular thylakoid membrane. It carries out the reaction 2 a plastoquinone + 4 hnu + 2 H2O = 2 a plastoquinol + O2. Its function is as follows. Photosystem II (PSII) is a light-driven water:plastoquinone oxidoreductase that uses light energy to abstract electrons from H(2)O, generating O(2) and a proton gradient subsequently used for ATP formation. It consists of a core antenna complex that captures photons, and an electron transfer chain that converts photonic excitation into a charge separation. The D1/D2 (PsbA/PsbD) reaction center heterodimer binds P680, the primary electron donor of PSII as well as several subsequent electron acceptors. D2 is needed for assembly of a stable PSII complex. The chain is Photosystem II D2 protein from Picosynechococcus sp. (strain ATCC 27264 / PCC 7002 / PR-6) (Agmenellum quadruplicatum).